A 365-amino-acid chain; its full sequence is 3-dehydroquinate synthase (365 aa).

NAD(+) is bound by residues 69 to 74 (DGEAHK), 103 to 107 (GVIGD), 127 to 128 (TT), Lys140, and Lys149. Glu182, His245, and His262 together coordinate Zn(2+).

This sequence belongs to the sugar phosphate cyclases superfamily. Dehydroquinate synthase family. NAD(+) is required as a cofactor. It depends on Co(2+) as a cofactor. The cofactor is Zn(2+).

It localises to the cytoplasm. The catalysed reaction is 7-phospho-2-dehydro-3-deoxy-D-arabino-heptonate = 3-dehydroquinate + phosphate. It functions in the pathway metabolic intermediate biosynthesis; chorismate biosynthesis; chorismate from D-erythrose 4-phosphate and phosphoenolpyruvate: step 2/7. Its function is as follows. Catalyzes the conversion of 3-deoxy-D-arabino-heptulosonate 7-phosphate (DAHP) to dehydroquinate (DHQ). In Pseudomonas putida (strain ATCC 47054 / DSM 6125 / CFBP 8728 / NCIMB 11950 / KT2440), this protein is 3-dehydroquinate synthase.